We begin with the raw amino-acid sequence, 423 residues long: Glutamate--cysteine ligase EgtA (423 aa).

The protein belongs to the glutamate--cysteine ligase type 2 family. EgtA subfamily.

It carries out the reaction L-cysteine + L-glutamate + ATP = gamma-L-glutamyl-L-cysteine + ADP + phosphate + H(+). Its pathway is amino-acid biosynthesis; ergothioneine biosynthesis. Its function is as follows. Catalyzes the synthesis of gamma-glutamylcysteine (gamma-GC). This compound is used as substrate for the biosynthesis of the low-molecular thiol compound ergothioneine. The sequence is that of Glutamate--cysteine ligase EgtA from Mycolicibacterium smegmatis (strain ATCC 700084 / mc(2)155) (Mycobacterium smegmatis).